The sequence spans 134 residues: Holo-[acyl-carrier-protein] synthase (134 aa).

Mg(2+) is bound by residues D8 and E57.

Belongs to the P-Pant transferase superfamily. AcpS family. Requires Mg(2+) as cofactor.

It is found in the cytoplasm. It catalyses the reaction apo-[ACP] + CoA = holo-[ACP] + adenosine 3',5'-bisphosphate + H(+). Its function is as follows. Transfers the 4'-phosphopantetheine moiety from coenzyme A to a Ser of acyl-carrier-protein. The sequence is that of Holo-[acyl-carrier-protein] synthase from Rhizobium leguminosarum bv. trifolii (strain WSM2304).